The following is a 373-amino-acid chain: 3 beta-hydroxysteroid dehydrogenase/Delta 5--&gt;4-isomerase type 2 (373 aa).

Tyr-155 acts as the Proton acceptor in catalysis. Lys-159 is an NAD(+) binding site. Residues 288–308 (VALLYWLGFLLELVNFLLRPV) traverse the membrane as a helical segment.

The protein belongs to the 3-beta-HSD family. High levels in adrenal gland, kidney and male liver. Low levels in female liver.

The protein localises to the endoplasmic reticulum membrane. It is found in the mitochondrion membrane. The catalysed reaction is a 3beta-hydroxy-Delta(5)-steroid + NAD(+) = a 3-oxo-Delta(5)-steroid + NADH + H(+). The enzyme catalyses a 3-oxo-Delta(5)-steroid = a 3-oxo-Delta(4)-steroid. It catalyses the reaction pregnenolone + NAD(+) = pregn-5-ene-3,20-dione + NADH + H(+). It carries out the reaction pregn-5-ene-3,20-dione = progesterone. The catalysed reaction is 3beta-hydroxyandrost-5-en-17-one + NAD(+) = androst-5-ene-3,17-dione + NADH + H(+). The enzyme catalyses androst-5-ene-3,17-dione = androst-4-ene-3,17-dione. It functions in the pathway lipid metabolism; steroid biosynthesis. 3-beta-HSD is a bifunctional enzyme, that catalyzes the oxidative conversion of Delta(5)-ene-3-beta-hydroxy steroid, and the oxidative conversion of ketosteroids. The 3-beta-HSD enzymatic system plays a crucial role in the biosynthesis of all classes of hormonal steroids. The sequence is that of 3 beta-hydroxysteroid dehydrogenase/Delta 5--&gt;4-isomerase type 2 (HSD3B2) from Mesocricetus auratus (Golden hamster).